The sequence spans 1793 residues: uncharacterized protein (1793 aa).

Disordered stretches follow at residues 156 to 189 (ARQA…ASSQ), 204 to 362 (QRES…PPKV), and 407 to 505 (ASFG…SGAA). Residues 166 to 175 (SSAQDSQELK) are compositionally biased toward polar residues. Over residues 227–237 (SPKEKAQDEPS) the composition is skewed to basic and acidic residues. A compositionally biased stretch (polar residues) spans 238-247 (SKTPSPQNNP). The segment covering 248 to 258 (ASSQLSRSQHS) has biased composition (low complexity). A compositionally biased stretch (basic and acidic residues) spans 277–288 (KAEEDGLSKMED). A compositionally biased stretch (low complexity) spans 289 to 307 (STTSTGALATSSSSLGFES). Over residues 317-342 (AVGGEGEKISGGGGGGKGGGGGGAGD) the composition is skewed to gly residues. Residues 434–450 (STTPSTNTTRTPSPTSS) show a composition bias toward low complexity. Over residues 463-476 (DTSSTEVGSGPSDS) the composition is skewed to polar residues. Low complexity predominate over residues 485–505 (PGTAPLTEPLPETPEAASGAA). Thr-733 is modified (phosphothreonine). Disordered regions lie at residues 757–809 (RSES…SKFA), 829–917 (MERG…FTDG), 1090–1147 (RDIR…GSGS), 1161–1187 (QRED…NSSS), 1229–1249 (QKTP…ATKP), 1408–1465 (TGGV…KSNS), and 1482–1567 (GELL…PLPF). Basic and acidic residues-rich tracts occupy residues 829-839 (MERGEVMDTSH) and 846-872 (KETE…HSEA). A compositionally biased stretch (low complexity) spans 1113–1123 (KGSGDSSDKGS). The segment covering 1161–1174 (QREDSMDREPRESM) has biased composition (basic and acidic residues). Ser-1187 is modified (phosphoserine). The span at 1231-1246 (TPEKLKEEEVKEEGKA) shows a compositional bias: basic and acidic residues. The span at 1513–1528 (SQVPSSSKGSQVSGTS) shows a compositional bias: low complexity. Residues 1546-1555 (PPGPQSPEHP) are compositionally biased toward pro residues. The residue at position 1774 (Arg-1774) is an Omega-N-methylarginine.

In terms of tissue distribution, expressed in muscle, heart, kidney and liver but barely detectable in lung, pancreas and brain. In liver veins, expressed in hepatic vein, extrahepatic portal vein and intrahepatic portal vein.

This is an uncharacterized protein from Homo sapiens (Human).